A 275-amino-acid polypeptide reads, in one-letter code: Provicilin (275 aa).

Over residues 1-17 (DNAEIEKILLEEHEKET) the composition is skewed to basic and acidic residues. 2 disordered regions span residues 1–71 (DNAE…LKSS) and 134–164 (LVGQRNENQQGLREEDDEEEEQREEETKNQV). Positions 50–63 (NAKSSSKKSVSSRS) are enriched in low complexity. The region spanning 66-238 (FNLKSSDPIY…TFPGSAQEVD (173 aa)) is the Cupin type-1 domain. Residues 147–157 (EEDDEEEEQRE) show a composition bias toward acidic residues.

This sequence belongs to the 7S seed storage protein family.

It localises to the vacuole. The protein resides in the aleurone grain. In terms of biological role, seed storage protein. The polypeptide is Provicilin (Pisum sativum (Garden pea)).